The following is a 338-amino-acid chain: Glycerol-3-phosphate dehydrogenase [NAD(P)+] (338 aa).

Tryptophan 11, arginine 30, and lysine 109 together coordinate NADPH. Lysine 109, glycine 143, and serine 145 together coordinate sn-glycerol 3-phosphate. Alanine 147 is a binding site for NADPH. The sn-glycerol 3-phosphate site is built by lysine 198, aspartate 251, serine 261, arginine 262, and asparagine 263. Lysine 198 acts as the Proton acceptor in catalysis. An NADPH-binding site is contributed by arginine 262. Valine 286 and glutamate 288 together coordinate NADPH.

Belongs to the NAD-dependent glycerol-3-phosphate dehydrogenase family.

The protein resides in the cytoplasm. It catalyses the reaction sn-glycerol 3-phosphate + NAD(+) = dihydroxyacetone phosphate + NADH + H(+). The catalysed reaction is sn-glycerol 3-phosphate + NADP(+) = dihydroxyacetone phosphate + NADPH + H(+). It functions in the pathway membrane lipid metabolism; glycerophospholipid metabolism. Its function is as follows. Catalyzes the reduction of the glycolytic intermediate dihydroxyacetone phosphate (DHAP) to sn-glycerol 3-phosphate (G3P), the key precursor for phospholipid synthesis. In Cupriavidus necator (strain ATCC 17699 / DSM 428 / KCTC 22496 / NCIMB 10442 / H16 / Stanier 337) (Ralstonia eutropha), this protein is Glycerol-3-phosphate dehydrogenase [NAD(P)+].